We begin with the raw amino-acid sequence, 561 residues long: DNA ligase B (561 aa).

Residue K125 is the N6-AMP-lysine intermediate of the active site.

Belongs to the NAD-dependent DNA ligase family. LigB subfamily.

It carries out the reaction NAD(+) + (deoxyribonucleotide)n-3'-hydroxyl + 5'-phospho-(deoxyribonucleotide)m = (deoxyribonucleotide)n+m + AMP + beta-nicotinamide D-nucleotide.. Functionally, catalyzes the formation of phosphodiester linkages between 5'-phosphoryl and 3'-hydroxyl groups in double-stranded DNA using NAD as a coenzyme and as the energy source for the reaction. The polypeptide is DNA ligase B (Salmonella gallinarum (strain 287/91 / NCTC 13346)).